The sequence spans 721 residues: Penicillin-binding protein activator LpoA (721 aa).

Positions 1–26 are cleaved as a signal peptide; sequence MVPLTFLRTKASRSLPIMLAALIFAG. Cysteine 27 carries the N-palmitoyl cysteine lipid modification. Cysteine 27 is lipidated: S-diacylglycerol cysteine. A compositionally biased stretch (polar residues) spans 316–330; that stretch reads TSDLTSAQAPAQGTM. The interval 316 to 393 is disordered; it reads TSDLTSAQAP…PAAQPQAVAA (78 aa). Residues 331-393 show a composition bias toward low complexity; it reads QNPVTAPTTP…PAAQPQAVAA (63 aa).

It belongs to the LpoA family. Interacts with PBP1a.

Its subcellular location is the cell outer membrane. Functionally, regulator of peptidoglycan synthesis that is essential for the function of penicillin-binding protein 1A (PBP1a). This Enterobacter sp. (strain 638) protein is Penicillin-binding protein activator LpoA.